The chain runs to 112 residues: Small ribosomal subunit protein bS6 (112 aa).

The protein belongs to the bacterial ribosomal protein bS6 family.

Binds together with bS18 to 16S ribosomal RNA. This Chlamydia pneumoniae (Chlamydophila pneumoniae) protein is Small ribosomal subunit protein bS6 (rpsF).